A 269-amino-acid chain; its full sequence is Cytochrome c oxidase subunit 3 (269 aa).

A run of 7 helical transmembrane segments spans residues 13–33 (PFHL…LLVL), 46–66 (NGHY…SFWF), 90–110 (GVIL…WAFF), 138–160 (PLLN…HSII), 167–187 (ALYG…FQGV), 207–227 (FGTG…LVAL), and 245–265 (AGIL…ISIY).

This sequence belongs to the cytochrome c oxidase subunit 3 family. In terms of assembly, component of the cytochrome c oxidase (complex IV, CIV), a multisubunit enzyme composed of a catalytic core of 3 subunits and several supernumerary subunits. The complex exists as a monomer or a dimer and forms supercomplexes (SCs) in the inner mitochondrial membrane with ubiquinol-cytochrome c oxidoreductase (cytochrome b-c1 complex, complex III, CIII).

It is found in the mitochondrion inner membrane. It catalyses the reaction 4 Fe(II)-[cytochrome c] + O2 + 8 H(+)(in) = 4 Fe(III)-[cytochrome c] + 2 H2O + 4 H(+)(out). In terms of biological role, component of the cytochrome c oxidase, the last enzyme in the mitochondrial electron transport chain which drives oxidative phosphorylation. The respiratory chain contains 3 multisubunit complexes succinate dehydrogenase (complex II, CII), ubiquinol-cytochrome c oxidoreductase (cytochrome b-c1 complex, complex III, CIII) and cytochrome c oxidase (complex IV, CIV), that cooperate to transfer electrons derived from NADH and succinate to molecular oxygen, creating an electrochemical gradient over the inner membrane that drives transmembrane transport and the ATP synthase. Cytochrome c oxidase is the component of the respiratory chain that catalyzes the reduction of oxygen to water. Electrons originating from reduced cytochrome c in the intermembrane space (IMS) are transferred via the dinuclear copper A center (CU(A)) of subunit 2 and heme A of subunit 1 to the active site in subunit 1, a binuclear center (BNC) formed by heme A3 and copper B (CU(B)). The BNC reduces molecular oxygen to 2 water molecules using 4 electrons from cytochrome c in the IMS and 4 protons from the mitochondrial matrix. This Pyricularia grisea (Crabgrass-specific blast fungus) protein is Cytochrome c oxidase subunit 3 (COX3).